Consider the following 274-residue polypeptide: Nitrogenase iron protein (274 aa).

8 to 15 (GKGGIGKS) contacts ATP. C94 contributes to the [4Fe-4S] cluster binding site. ADP-ribosylarginine; by dinitrogenase reductase ADP-ribosyltransferase is present on R97. C131 is a binding site for [4Fe-4S] cluster.

This sequence belongs to the NifH/BchL/ChlL family. As to quaternary structure, homodimer. The cofactor is [4Fe-4S] cluster. Post-translationally, the reversible ADP-ribosylation of Arg-97 inactivates the nitrogenase reductase and regulates nitrogenase activity.

The enzyme catalyses N2 + 8 reduced [2Fe-2S]-[ferredoxin] + 16 ATP + 16 H2O = H2 + 8 oxidized [2Fe-2S]-[ferredoxin] + 2 NH4(+) + 16 ADP + 16 phosphate + 6 H(+). The key enzymatic reactions in nitrogen fixation are catalyzed by the nitrogenase complex, which has 2 components: the iron protein and the molybdenum-iron protein. The chain is Nitrogenase iron protein from Chlorobium limicola (strain DSM 245 / NBRC 103803 / 6330).